A 271-amino-acid chain; its full sequence is Ribosomal RNA small subunit methyltransferase A (271 aa).

Histidine 11, leucine 13, glycine 38, glutamate 59, aspartate 84, and asparagine 109 together coordinate S-adenosyl-L-methionine.

It belongs to the class I-like SAM-binding methyltransferase superfamily. rRNA adenine N(6)-methyltransferase family. RsmA subfamily.

Its subcellular location is the cytoplasm. It carries out the reaction adenosine(1518)/adenosine(1519) in 16S rRNA + 4 S-adenosyl-L-methionine = N(6)-dimethyladenosine(1518)/N(6)-dimethyladenosine(1519) in 16S rRNA + 4 S-adenosyl-L-homocysteine + 4 H(+). Functionally, specifically dimethylates two adjacent adenosines (A1518 and A1519) in the loop of a conserved hairpin near the 3'-end of 16S rRNA in the 30S particle. May play a critical role in biogenesis of 30S subunits. This Nostoc sp. (strain PCC 7120 / SAG 25.82 / UTEX 2576) protein is Ribosomal RNA small subunit methyltransferase A.